A 228-amino-acid chain; its full sequence is Somatolactin (228 aa).

The signal sequence occupies residues 1 to 24 (MFSIRMNKVLQGFVCLMLTHRIVG). Cystine bridges form between cysteine 29–cysteine 38, cysteine 88–cysteine 200, and cysteine 217–cysteine 225. N-linked (GlcNAc...) asparagine glycosylation is found at asparagine 141 and asparagine 177.

The protein belongs to the somatotropin/prolactin family.

The protein localises to the secreted. This chain is Somatolactin, found in Anguilla anguilla (European freshwater eel).